The primary structure comprises 411 residues: Lissencephaly-1 homolog (411 aa).

Residues 9–41 (QREELNQAIADYLGSNGYGDSLETFRKEADVST) form the LisH domain. Residues 56 to 83 (TSVIRLQKKVMELEAKLTEAEKEVIEGA) are a coiled coil. WD repeat units follow at residues 106–147 (GHRA…RSLK), 148–187 (GHTD…ECVK), 191–230 (GHDH…CVKT), 233–272 (GHRE…CKVE), 275–334 (DHEH…CLLT), 337–376 (GHDN…CMKT), and 379–411 (AHQH…WECR).

The protein belongs to the WD repeat LIS1/nudF family.

It is found in the cytoplasm. It localises to the cytoskeleton. Its subcellular location is the microtubule organizing center. The protein resides in the centrosome. Positively regulates the activity of the minus-end directed microtubule motor protein dynein. May enhance dynein-mediated microtubule sliding by targeting dynein to the microtubule plus end. Required for several dynein- and microtubule-dependent processes. The sequence is that of Lissencephaly-1 homolog from Drosophila persimilis (Fruit fly).